A 397-amino-acid chain; its full sequence is MSTYIPIHDRPPHYANLPSPPSNSRQPRPPRYSSPDIDPDIPLARMSSAHESDPSEQANATQSGDYVPRQRVGSQGAEQEGQSRKRARTSPSHSGGNGSYVPRQRTEESHHSHHNGHSGHAQSDQHGNGQVYRPRHGQAPLTGSIFNLSPRNPFTSVVGDFIMNAAMGHSNVEIELKLGTFMTPSMPGQQPRRINMPTLSEMIIPHDYPNGPFVSTINHLHHRTLNELLNRAVESQSTHPTGRLYFSRSKLADSFYDHSEHGHGKVRVSRDMDNGHVVQAVEKRRIADLNVYCPGMAYDFRISVNTETPCEVPTGNAKSVRYKDRACYRHQVCRVDLTSVFSSNPRNADVPPSRSFELEIEVLDVPALLAEGAAQSERFDEILQNVLDSARMLVKNI.

The disordered stretch occupies residues 1-149; sequence MSTYIPIHDR…PLTGSIFNLS (149 aa). Polar residues predominate over residues 55 to 64; sequence SEQANATQSG.

It belongs to the fungal TPase family. Heterodimer. The mRNA-capping enzyme is composed of two separate chains alpha and beta, respectively a mRNA guanylyltransferase and an mRNA 5'-triphosphate monophosphatase. The cofactor is Mg(2+).

Its subcellular location is the nucleus. It catalyses the reaction a 5'-end triphospho-ribonucleoside in mRNA + H2O = a 5'-end diphospho-ribonucleoside in mRNA + phosphate + H(+). In terms of biological role, first step of mRNA capping. Converts the 5'-triphosphate end of a nascent mRNA chain into a diphosphate end. This chain is mRNA-capping enzyme subunit beta (CET1), found in Cryptococcus neoformans var. neoformans serotype D (strain JEC21 / ATCC MYA-565) (Filobasidiella neoformans).